The primary structure comprises 225 residues: Octanoyltransferase (225 aa).

In terms of domain architecture, BPL/LPL catalytic spans 44-219 (RETPDEIWLL…NFIAQLTHRI (176 aa)). Substrate is bound by residues 83-90 (RGGQITYH), 150-152 (SLG), and 163-165 (GIA). Cys-181 functions as the Acyl-thioester intermediate in the catalytic mechanism.

It belongs to the LipB family.

The protein localises to the cytoplasm. The catalysed reaction is octanoyl-[ACP] + L-lysyl-[protein] = N(6)-octanoyl-L-lysyl-[protein] + holo-[ACP] + H(+). It functions in the pathway protein modification; protein lipoylation via endogenous pathway; protein N(6)-(lipoyl)lysine from octanoyl-[acyl-carrier-protein]: step 1/2. Catalyzes the transfer of endogenously produced octanoic acid from octanoyl-acyl-carrier-protein onto the lipoyl domains of lipoate-dependent enzymes. Lipoyl-ACP can also act as a substrate although octanoyl-ACP is likely to be the physiological substrate. The sequence is that of Octanoyltransferase from Nitrosomonas eutropha (strain DSM 101675 / C91 / Nm57).